Consider the following 244-residue polypeptide: Phosphoadenosine 5'-phosphosulfate reductase (244 aa).

The active-site Nucleophile; cysteine thiosulfonate intermediate is the Cys239.

The protein belongs to the PAPS reductase family. CysH subfamily.

The protein localises to the cytoplasm. The enzyme catalyses [thioredoxin]-disulfide + sulfite + adenosine 3',5'-bisphosphate + 2 H(+) = [thioredoxin]-dithiol + 3'-phosphoadenylyl sulfate. It participates in sulfur metabolism; hydrogen sulfide biosynthesis; sulfite from sulfate: step 3/3. In terms of biological role, catalyzes the formation of sulfite from phosphoadenosine 5'-phosphosulfate (PAPS) using thioredoxin as an electron donor. This chain is Phosphoadenosine 5'-phosphosulfate reductase, found in Escherichia coli O157:H7.